A 73-amino-acid polypeptide reads, in one-letter code: Toxin Td3 (73 aa).

Positions 1-7 are cleaved as a signal peptide; that stretch reads IGMVVEC. The 63-residue stretch at 8-70 folds into the LCN-type CS-alpha/beta domain; sequence KDGYLMGPDG…VWERATNRCG (63 aa). Disulfide bonds link C18-C69, C22-C44, C30-C50, and C34-C52. K71 carries the lysine amide modification.

Belongs to the long (4 C-C) scorpion toxin superfamily. Sodium channel inhibitor family. Beta subfamily. As to expression, expressed by the venom gland.

The protein localises to the secreted. Functionally, beta toxins bind voltage-independently at site-4 of sodium channels (Nav) and shift the voltage of activation toward more negative potentials thereby affecting sodium channel activation and promoting spontaneous and repetitive firing. This chain is Toxin Td3, found in Tityus discrepans (Venezuelan scorpion).